We begin with the raw amino-acid sequence, 470 residues long: Syncoilin (470 aa).

The disordered stretch occupies residues 1–43 (MASPEPLRGGDGARASREPHTEASFPLQESESPKEAKTFNPEA). Residues 1–148 (MASPEPLRGG…TEGSLPAQPI (148 aa)) form a head region. Position 32 is a phosphoserine (serine 32). One can recognise an IF rod domain in the interval 157–452 (SVEDLERLEA…AMLPKSLEQA (296 aa)). Residues 158–192 (VEDLERLEARFQQCVQAVSQLEEERDQLIHELVLL) are coil 1A. A linker 1 region spans residues 193 to 219 (REPALQEVQQVHQDILAAYKLHAQAEL). Residues 220–297 (ERDGLREEIR…KEQLQQQLEA (78 aa)) are coil 1b. The tract at residues 298-337 (PPTQSDGHFLQESRRLSTQFENLMAESRQGLEEEYEPQLL) is linker 2. Phosphoserine is present on serine 314. Residues 338-445 (RLLERKEAGT…EELSTYKAML (108 aa)) form a coil 2 region. The tract at residues 446–470 (PKSLEQADAPTSQAGGVEAQSPGTV) is disordered. The tract at residues 446 to 470 (PKSLEQADAPTSQAGGVEAQSPGTV) is tail.

Belongs to the intermediate filament family. May link the dystrophin-associated glycoprotein complex (DAPC) to intracellular desmin (DES) filaments. Interacts with DES and DTNA. Detected strongly in skeletal muscle and heart and weakly in lung (at protein level). Highly expressed in skeletal muscle and lung and weakly in lung and testis.

It is found in the cytoplasm. It localises to the perinuclear region. In terms of biological role, atypical type III intermediate filament (IF) protein that may play a supportive role in the efficient coupling of mechanical stress between the myofibril and fiber exterior. May facilitate lateral force transmission during skeletal muscle contraction. Does not form homofilaments nor heterofilaments with other IF proteins. The polypeptide is Syncoilin (Sync) (Mus musculus (Mouse)).